A 70-amino-acid polypeptide reads, in one-letter code: Small ribosomal subunit protein bS21 (70 aa).

Belongs to the bacterial ribosomal protein bS21 family.

The sequence is that of Small ribosomal subunit protein bS21 from Sulfurimonas denitrificans (strain ATCC 33889 / DSM 1251) (Thiomicrospira denitrificans (strain ATCC 33889 / DSM 1251)).